The chain runs to 255 residues: Ribonuclease HII (255 aa).

One can recognise an RNase H type-2 domain in the interval A72–L255. A divalent metal cation is bound by residues D78, E79, and D170.

Belongs to the RNase HII family. Mn(2+) is required as a cofactor. Mg(2+) serves as cofactor.

The protein localises to the cytoplasm. The catalysed reaction is Endonucleolytic cleavage to 5'-phosphomonoester.. Endonuclease that specifically degrades the RNA of RNA-DNA hybrids. In Staphylococcus aureus (strain MRSA252), this protein is Ribonuclease HII.